Here is a 193-residue protein sequence, read N- to C-terminus: Holliday junction branch migration complex subunit RuvA (193 aa).

The domain I stretch occupies residues 1–64 (MIGRIAGILL…EDAHLLYGFL (64 aa)). The tract at residues 65–139 (TPQERTTFRE…GKLGADLGAL (75 aa)) is domain II. The segment at 139 to 143 (LAGAA) is flexible linker. The tract at residues 144 to 193 (SASDHATDILNALLALGYSEKEGLAAIKNVPAGTGVSEGIKLALKALSKA) is domain III.

Belongs to the RuvA family. In terms of assembly, homotetramer. Forms an RuvA(8)-RuvB(12)-Holliday junction (HJ) complex. HJ DNA is sandwiched between 2 RuvA tetramers; dsDNA enters through RuvA and exits via RuvB. An RuvB hexamer assembles on each DNA strand where it exits the tetramer. Each RuvB hexamer is contacted by two RuvA subunits (via domain III) on 2 adjacent RuvB subunits; this complex drives branch migration. In the full resolvosome a probable DNA-RuvA(4)-RuvB(12)-RuvC(2) complex forms which resolves the HJ.

It localises to the cytoplasm. In terms of biological role, the RuvA-RuvB-RuvC complex processes Holliday junction (HJ) DNA during genetic recombination and DNA repair, while the RuvA-RuvB complex plays an important role in the rescue of blocked DNA replication forks via replication fork reversal (RFR). RuvA specifically binds to HJ cruciform DNA, conferring on it an open structure. The RuvB hexamer acts as an ATP-dependent pump, pulling dsDNA into and through the RuvAB complex. HJ branch migration allows RuvC to scan DNA until it finds its consensus sequence, where it cleaves and resolves the cruciform DNA. The protein is Holliday junction branch migration complex subunit RuvA of Burkholderia cenocepacia (strain HI2424).